The sequence spans 82 residues: UPF0235 protein Pden_2174 (82 aa).

This sequence belongs to the UPF0235 family.

In Paracoccus denitrificans (strain Pd 1222), this protein is UPF0235 protein Pden_2174.